Consider the following 238-residue polypeptide: tRNA (guanine-N(7)-)-methyltransferase (238 aa).

Residues Glu-68, Glu-93, Asp-120, and Asp-143 each contribute to the S-adenosyl-L-methionine site. The active site involves Asp-143. Substrate is bound by residues Lys-147, Asp-179, and 216–219; that span reads TKFE.

The protein belongs to the class I-like SAM-binding methyltransferase superfamily. TrmB family.

It carries out the reaction guanosine(46) in tRNA + S-adenosyl-L-methionine = N(7)-methylguanosine(46) in tRNA + S-adenosyl-L-homocysteine. It participates in tRNA modification; N(7)-methylguanine-tRNA biosynthesis. In terms of biological role, catalyzes the formation of N(7)-methylguanine at position 46 (m7G46) in tRNA. In Shewanella sp. (strain W3-18-1), this protein is tRNA (guanine-N(7)-)-methyltransferase.